Here is an 88-residue protein sequence, read N- to C-terminus: Large ribosomal subunit protein bL31B (88 aa).

This sequence belongs to the bacterial ribosomal protein bL31 family. Type B subfamily. As to quaternary structure, part of the 50S ribosomal subunit.

This chain is Large ribosomal subunit protein bL31B, found in Corynebacterium efficiens (strain DSM 44549 / YS-314 / AJ 12310 / JCM 11189 / NBRC 100395).